Here is a 372-residue protein sequence, read N- to C-terminus: Putative 26S proteasome regulatory subunit homolog MTBMA_c13930 (372 aa).

Position 164-171 (164-171 (GSPGTGKT)) interacts with ATP.

This sequence belongs to the AAA ATPase family.

In terms of biological role, the 26S proteasome is involved in the ATP-dependent degradation of ubiquitinated proteins. The regulatory (or ATPase) complex confers ATP dependency and substrate specificity to the 26S complex. This chain is Putative 26S proteasome regulatory subunit homolog MTBMA_c13930, found in Methanothermobacter marburgensis (strain ATCC BAA-927 / DSM 2133 / JCM 14651 / NBRC 100331 / OCM 82 / Marburg) (Methanobacterium thermoautotrophicum).